A 431-amino-acid chain; its full sequence is tRNA(Ile)-lysidine synthase (431 aa).

25–30 (SGGPDS) contributes to the ATP binding site.

Belongs to the tRNA(Ile)-lysidine synthase family.

The protein localises to the cytoplasm. It carries out the reaction cytidine(34) in tRNA(Ile2) + L-lysine + ATP = lysidine(34) in tRNA(Ile2) + AMP + diphosphate + H(+). Functionally, ligates lysine onto the cytidine present at position 34 of the AUA codon-specific tRNA(Ile) that contains the anticodon CAU, in an ATP-dependent manner. Cytidine is converted to lysidine, thus changing the amino acid specificity of the tRNA from methionine to isoleucine. In Lactobacillus gasseri (strain ATCC 33323 / DSM 20243 / BCRC 14619 / CIP 102991 / JCM 1131 / KCTC 3163 / NCIMB 11718 / NCTC 13722 / AM63), this protein is tRNA(Ile)-lysidine synthase.